Here is a 501-residue protein sequence, read N- to C-terminus: uncharacterized protein (501 aa).

7 helical membrane passes run 14-34, 73-93, 111-131, 197-217, 274-294, 297-317, and 466-486; these read AIFI…SGSV, FILF…LGYM, IFGI…ICIF, FIIA…VLLI, ILLS…YYFG, FNLI…YNLI, and FLVL…RLIL.

The protein resides in the membrane. This is an uncharacterized protein from Dictyostelium discoideum (Social amoeba).